We begin with the raw amino-acid sequence, 363 residues long: Fructose-1,6-bisphosphatase 1 (363 aa).

Residue Val2 is modified to N-acetylvaline. AMP-binding positions include 18–22 (VLEEG) and 28–32 (TGEMT). Mg(2+) is bound by residues Asp69 and Glu98. 113 to 114 (KY) contacts AMP. Residues Asp119, Leu121, and Asp122 each contribute to the Mg(2+) site. Position 122 to 125 (122 to 125 (DGSS)) interacts with substrate. Arg141 lines the AMP pocket. Lys151 is modified (N6-succinyllysine). Substrate contacts are provided by residues 213 to 216 (NEGY), 244 to 249 (RYVGSM), Tyr265, and 275 to 277 (KLR). Phosphotyrosine is present on residues Tyr216, Tyr245, and Tyr265. A Mg(2+)-binding site is contributed by Glu281. Phosphoserine is present on residues Ser339 and Ser353.

This sequence belongs to the FBPase class 1 family. In terms of assembly, homotetramer. It depends on Mg(2+) as a cofactor.

The enzyme catalyses beta-D-fructose 1,6-bisphosphate + H2O = beta-D-fructose 6-phosphate + phosphate. It participates in carbohydrate biosynthesis; gluconeogenesis. Subject to complex allosteric regulation. The enzyme can assume an active R-state, or an inactive T-state. Intermediate conformations may exist. AMP acts as an allosteric inhibitor. AMP binding affects the turnover of bound substrate and not the affinity for substrate. Fructose 2,6-bisphosphate acts as a competitive inhibitor. Fructose 2,6-bisphosphate and AMP have synergistic effects. Its function is as follows. Catalyzes the hydrolysis of fructose 1,6-bisphosphate to fructose 6-phosphate in the presence of divalent cations, acting as a rate-limiting enzyme in gluconeogenesis. Plays a role in regulating glucose sensing and insulin secretion of pancreatic beta-cells. Appears to modulate glycerol gluconeogenesis in liver. Important regulator of appetite and adiposity; increased expression of the protein in liver after nutrient excess increases circulating satiety hormones and reduces appetite-stimulating neuropeptides and thus seems to provide a feedback mechanism to limit weight gain. This chain is Fructose-1,6-bisphosphatase 1 (Fbp1), found in Rattus norvegicus (Rat).